The following is a 510-amino-acid chain: Archaeal glutamate synthase [NADPH] (510 aa).

4Fe-4S ferredoxin-type domains are found at residues 10–37 (YKVEVDPNRCMLCERCTIECSWGVYRRE) and 38–68 (GDRIISYSNRCGACHRCVVMCPRDAITIKEN). Residues C19, C22, C25, C29, C48, C51, C54, and C58 each contribute to the [4Fe-4S] cluster site.

The protein belongs to the glutamate synthase family. It depends on FMN as a cofactor.

The enzyme catalyses 2 L-glutamate + NADP(+) = L-glutamine + 2-oxoglutarate + NADPH + H(+). This is Archaeal glutamate synthase [NADPH] from Methanocaldococcus jannaschii (strain ATCC 43067 / DSM 2661 / JAL-1 / JCM 10045 / NBRC 100440) (Methanococcus jannaschii).